We begin with the raw amino-acid sequence, 30 residues long: Cycloviolacin-H3 (30 aa).

The cyclopeptide (Gly-Asn) cross-link spans 1-30; sequence GLPVCGETCFGGTCNTPGCICDPWPVCTRN. Disulfide bonds link Cys5–Cys19, Cys9–Cys21, and Cys14–Cys27.

In terms of processing, this is a cyclic peptide.

Functionally, probably participates in a plant defense mechanism. The polypeptide is Cycloviolacin-H3 (Viola hederacea (Australian violet)).